Here is a 659-residue protein sequence, read N- to C-terminus: Biosynthetic arginine decarboxylase (659 aa).

The residue at position 128 (lysine 128) is an N6-(pyridoxal phosphate)lysine. 308-318 (FDVGGGLGVDY) serves as a coordination point for substrate.

The protein belongs to the Orn/Lys/Arg decarboxylase class-II family. SpeA subfamily. The cofactor is Mg(2+). Pyridoxal 5'-phosphate serves as cofactor.

The enzyme catalyses L-arginine + H(+) = agmatine + CO2. It functions in the pathway amine and polyamine biosynthesis; agmatine biosynthesis; agmatine from L-arginine: step 1/1. Its function is as follows. Catalyzes the biosynthesis of agmatine from arginine. This is Biosynthetic arginine decarboxylase from Yersinia pestis.